We begin with the raw amino-acid sequence, 506 residues long: ESX-5 secretion system ATPase EccB5 (506 aa).

The helical transmembrane segment at 56–76 threads the bilayer; that stretch reads VVASVSAALVICLGALLWSFI.

It belongs to the EccB family. As to quaternary structure, part of the ESX-5 / type VII secretion system (T7SS), which is composed of cytosolic and membrane components. The ESX-5 membrane complex is composed of EccB5, EccC5, EccD5 and EccE5.

It localises to the cell inner membrane. In terms of biological role, an ATPase. Part of the ESX-5 specialized secretion system, which is responsible for the secretion of EsxN and a number of PE_PGRS and PPE proteins, including PPE41. This Mycobacterium tuberculosis (strain CDC 1551 / Oshkosh) protein is ESX-5 secretion system ATPase EccB5.